Here is a 345-residue protein sequence, read N- to C-terminus: Dihydroorotate dehydrogenase (quinone) (345 aa).

FMN is bound by residues 65 to 69 and threonine 89; that span reads AGLDK. A substrate-binding site is contributed by lysine 69. 114-118 lines the substrate pocket; that stretch reads NRLGF. FMN is bound by residues asparagine 146 and asparagine 179. Asparagine 179 is a substrate binding site. The Nucleophile role is filled by serine 182. Asparagine 184 contributes to the substrate binding site. Lysine 224 and threonine 252 together coordinate FMN. 253-254 is a substrate binding site; that stretch reads NT. Residues glycine 275, glycine 304, and 325–326 each bind FMN; that span reads YT.

The protein belongs to the dihydroorotate dehydrogenase family. Type 2 subfamily. Monomer. It depends on FMN as a cofactor.

It is found in the cell membrane. The catalysed reaction is (S)-dihydroorotate + a quinone = orotate + a quinol. Its pathway is pyrimidine metabolism; UMP biosynthesis via de novo pathway; orotate from (S)-dihydroorotate (quinone route): step 1/1. Functionally, catalyzes the conversion of dihydroorotate to orotate with quinone as electron acceptor. The protein is Dihydroorotate dehydrogenase (quinone) of Leptothrix cholodnii (strain ATCC 51168 / LMG 8142 / SP-6) (Leptothrix discophora (strain SP-6)).